Here is a 401-residue protein sequence, read N- to C-terminus: Acetate kinase (401 aa).

Asparagine 7 lines the Mg(2+) pocket. An ATP-binding site is contributed by lysine 14. Arginine 91 provides a ligand contact to substrate. Aspartate 148 functions as the Proton donor/acceptor in the catalytic mechanism. ATP is bound by residues 208–212 (HLGNG), 283–285 (DFR), and 332–336 (GVGEN). Residue glutamate 385 coordinates Mg(2+).

Belongs to the acetokinase family. In terms of assembly, homodimer. It depends on Mg(2+) as a cofactor. The cofactor is Mn(2+).

The protein localises to the cytoplasm. It catalyses the reaction acetate + ATP = acetyl phosphate + ADP. It functions in the pathway metabolic intermediate biosynthesis; acetyl-CoA biosynthesis; acetyl-CoA from acetate: step 1/2. Catalyzes the formation of acetyl phosphate from acetate and ATP. Can also catalyze the reverse reaction. The protein is Acetate kinase of Thermoanaerobacter pseudethanolicus (strain ATCC 33223 / 39E) (Clostridium thermohydrosulfuricum).